The chain runs to 476 residues: ATP synthase subunit beta (476 aa).

154 to 161 is a binding site for ATP; that stretch reads GGAGVGKT.

Belongs to the ATPase alpha/beta chains family. As to quaternary structure, F-type ATPases have 2 components, CF(1) - the catalytic core - and CF(0) - the membrane proton channel. CF(1) has five subunits: alpha(3), beta(3), gamma(1), delta(1), epsilon(1). CF(0) has four main subunits: a(1), b(1), b'(1) and c(9-12).

The protein localises to the cell inner membrane. The catalysed reaction is ATP + H2O + 4 H(+)(in) = ADP + phosphate + 5 H(+)(out). Functionally, produces ATP from ADP in the presence of a proton gradient across the membrane. The catalytic sites are hosted primarily by the beta subunits. This chain is ATP synthase subunit beta, found in Rhodopseudomonas palustris (strain BisB5).